A 55-amino-acid polypeptide reads, in one-letter code: Large ribosomal subunit protein bL33 (55 aa).

It belongs to the bacterial ribosomal protein bL33 family.

The sequence is that of Large ribosomal subunit protein bL33 from Sinorhizobium medicae (strain WSM419) (Ensifer medicae).